A 361-amino-acid polypeptide reads, in one-letter code: Histidinol-phosphate aminotransferase (361 aa).

The segment at 26-45 is disordered; the sequence is GMDPEDLTKLSSNENPHGPS. The residue at position 222 (Lys-222) is an N6-(pyridoxal phosphate)lysine.

It belongs to the class-II pyridoxal-phosphate-dependent aminotransferase family. Histidinol-phosphate aminotransferase subfamily. It depends on pyridoxal 5'-phosphate as a cofactor.

It catalyses the reaction L-histidinol phosphate + 2-oxoglutarate = 3-(imidazol-4-yl)-2-oxopropyl phosphate + L-glutamate. Its pathway is amino-acid biosynthesis; L-histidine biosynthesis; L-histidine from 5-phospho-alpha-D-ribose 1-diphosphate: step 7/9. The protein is Histidinol-phosphate aminotransferase (hisC) of Haloferax volcanii (strain ATCC 29605 / DSM 3757 / JCM 8879 / NBRC 14742 / NCIMB 2012 / VKM B-1768 / DS2) (Halobacterium volcanii).